A 2024-amino-acid polypeptide reads, in one-letter code: Pericentriolar material 1 protein (2024 aa).

Residues 1–92 (MATGGGPFED…FPHSRYMSQM (92 aa)) are disordered. A2 bears the N-acetylalanine mark. Residues 2-1460 (ATGGGPFEDG…TWIASNSELT (1459 aa)) form a mediates interaction with DZIP1 region. The span at 43 to 61 (RSSEKNKKKFGVESDKRVT) shows a compositional bias: basic and acidic residues. S65, S68, S69, S93, S110, S116, and S119 each carry phosphoserine. Positions 111–163 (DLDQRSIGSDSQGRATAANNKRQLSENRKPFNFLPMQINTNKSKDASTNPPNR) are disordered. 2 stretches are compositionally biased toward polar residues: residues 116–132 (SIGSDSQGRATAANNKR) and 147–163 (QINTNKSKDASTNPPNR). The residue at position 159 (N159) is a Phosphoserine; in variant Ser-159. A coiled-coil region spans residues 218-301 (KASSMREDLV…QLRALQGRQA (84 aa)). The disordered stretch occupies residues 354-392 (RDSQPPAVPDNRRQAESLSLTREVSQSRKPSASERLPDE). Positions 369–383 (ESLSLTREVSQSRKP) are enriched in polar residues. Phosphoserine is present on S370. S372 carries the phosphoserine; by PLK4 modification. S384 is subject to Phosphoserine. The residue at position 399 (K399) is an N6-acetyllysine. A coiled-coil region spans residues 400–424 (MRVLQEKKQKMDKLLGELHTLRDQH). Disordered stretches follow at residues 421–492 (RDQH…KLQK) and 523–548 (ENRKDEETEESEYDSEHENSEPVTNI). Composition is skewed to polar residues over residues 425-445 (LNNSSSSPQRSVDQRSTSAPS) and 456-477 (GESNSLTSSVPYPTASLVSQNE). The stretch at 487 to 543 (SEKLQKLNEVRKRLNELRELVHYYEQTSDMMTDAVNENRKDEETEESEYDSEHENSE) forms a coiled coil. At S588 the chain carries Phosphoserine. 2 disordered regions span residues 614–652 (HVAQGEDDEEEEEEAEEEGVSGASLSSHRSSLVDEHPED) and 699–726 (FYPAEEDTKQNSNNTRGNANKTQKDTGV). A compositionally biased stretch (acidic residues) spans 618 to 632 (GEDDEEEEEEAEEEG). A compositionally biased stretch (low complexity) spans 634 to 643 (SGASLSSHRS). S643 carries the phosphoserine modification. Residues 651-682 (EDAEFEQKINRLMAAKQKLRQLQDLVAMVQDD) adopt a coiled-coil conformation. Residues 708 to 719 (QNSNNTRGNANK) are compositionally biased toward polar residues. Coiled-coil stretches lie at residues 726–769 (VNEK…LQTA) and 824–858 (SEMRRHEMLREELRQRRKQLEALMAEHQRRQGLAE). Position 859 is a phosphothreonine (T859). Phosphoserine is present on residues S861, S866, S869, and S872. Position 877 is a phosphothreonine (T877). The interval 915–947 (TDEEEEEEQDASSNDNFSVCPSNSVNHNSYNGK) is disordered. Positions 925 to 946 (ASSNDNFSVCPSNSVNHNSYNG) are enriched in polar residues. S960, S977, S988, and S991 each carry phosphoserine. Residues 1063 to 1089 (TQLTWQQNNVQRLKQMLNELMRQQNQH) adopt a coiled-coil conformation. Disordered regions lie at residues 1085-1109 (QQNQHPEKPGGKERGSSASHPPSPS) and 1152-1211 (FSQN…RTPW). Over residues 1089–1099 (HPEKPGGKERG) the composition is skewed to basic and acidic residues. Residues 1152–1173 (FSQNISTPSEQQQPLAQNSSGK) show a composition bias toward polar residues. S1185 and S1188 each carry phosphoserine. The segment covering 1192–1201 (EKPRNKKLPE) has biased composition (basic and acidic residues). Phosphoserine is present on residues S1229 and S1231. Residues 1232 to 1246 (VEKSTSSNRKNQLDT) show a composition bias toward polar residues. Residues 1232–1342 (VEKSTSSNRK…RHSAQTEEPV (111 aa)) form a disordered region. 4 positions are modified to phosphoserine: S1257, S1260, S1262, and S1263. Residues 1279 to 1799 (TRKASAQASL…TQALTNYGSG (521 aa)) are interaction with HAP1. Basic residues predominate over residues 1296 to 1313 (KSKSKKRNSTQLKSRVKN). Phosphoserine is present on residues S1318 and S1320. T1468 is modified (phosphothreonine). A coiled-coil region spans residues 1515-1539 (IHLDQALARMREYERMKTEAESNSN). 7 positions are modified to phosphoserine: S1573, S1697, S1730, S1765, S1768, S1776, and S1782. Disordered stretches follow at residues 1725–1868 (LEDH…NNCP) and 1880–1944 (EQPL…PVLV). Acidic residues predominate over residues 1768-1777 (SDQEEDEESE). Polar residues predominate over residues 1783–1797 (INLSKAETQALTNYG). The span at 1799–1815 (GEDENEDEEMEEFEEGP) shows a compositional bias: acidic residues. The segment covering 1818–1827 (VQTSLQANTE) has biased composition (polar residues). Positions 1835–1860 (DEQVLQRDFKKTAESKNVPLEREATS) are enriched in basic and acidic residues. The segment covering 1905 to 1916 (PLRLPEMEPLVP) has biased composition (low complexity). Positions 1913 to 2024 (PLVPRVKEVK…EPETVGAQSI (112 aa)) are interaction with BBS4. A compositionally biased stretch (polar residues) spans 1924–1933 (AQETPESSLA). Residues S1958 and S1977 each carry the phosphoserine modification. The segment at 2005–2024 (ELAGNSETLKEPETVGAQSI) is disordered.

The protein belongs to the PCM1 family. Self-associates. Interacts with C2CD3. Interacts with BBS4, BBS8, CETN3, HAP1, NDE1, NDEL1, MAP1LC3B, GABARAPAL2, and GABARAP. Interacts with CEP131; the interaction increases in response to ultraviolet light (UV) radiation. Associates with microtubule; association to microtubule is reduced in response to cellular stress, such as ultraviolet light (UV) radiation or heat shock, in a process that requires p38 MAP kinase signaling. Interacts with CFAP263. Interacts with SSX2IP. Interacts with CCDC13. Interacts with CEP290. Interacts with PARD6A. Interacts with KIAA0753/OFIP, CEP20/FOR20 and OFD1; the interaction with CEP20/FOR20 and OFD1 may be mediated by KIAA0753/OFIP. Interacts with CCDC66. Interacts with CCDC61. Interacts with DZIP1; localizes DZIP1 and the associated BBSome to centriolar satellite. Interacts with CSTPP1, TTLL1, TPGS1 and LRRC49. Interacts with CFAP53. Post-translationally, ubiquitinated. Undergoes monoubiquitination catalyzed by the E3 ubiquitin-protein ligase MIB1 in proliferating cells, preventing cilia formation. Monoubiquitination by MIB1 is inhibited in response to cellular stress, such as ultraviolet light (UV) radiation or heat shock, resulting in cilia formation initiation. Variant Ser-159 is phosphorylated. In terms of processing, phosphorylated on multiple serine and threonine residues by DYRK3 during the G2-to-M transition, after the nuclear-envelope breakdown. Phosphorylation by DYRK3 promotes disassembly of pericentriolar material. Phosphorylation at Ser-372 mediated by PLK4 is required to maintain the integrity of centriolar satellites. As to expression, expressed in blood, bone marrow, breast, lymph node, ovary and thyroid.

It localises to the cytoplasm. The protein localises to the cytoskeleton. Its subcellular location is the microtubule organizing center. It is found in the centrosome. The protein resides in the cytoplasmic granule. It localises to the centriolar satellite. The protein localises to the cilium basal body. In terms of biological role, required for centrosome assembly and function. Essential for the correct localization of several centrosomal proteins including CEP250, CETN3, PCNT and NEK2. Required to anchor microtubules to the centrosome. Also involved in cilium biogenesis by recruiting the BBSome, a ciliary protein complex involved in cilium biogenesis, to the centriolar satellites. Recruits the tubulin polyglutamylase complex (TPGC) to centriolar satellites. This is Pericentriolar material 1 protein from Homo sapiens (Human).